The following is a 368-amino-acid chain: Probable ubiquitin receptor RAD23a (368 aa).

Residues 1-77 (MKLTVKTLKG…GFLVVMLSKS (77 aa)) form the Ubiquitin-like domain. The segment covering 80-111 (ASSAGPSSTQPTSTTTSTISSTTLAAPSTTQS) has biased composition (low complexity). The tract at residues 80–136 (ASSAGPSSTQPTSTTTSTISSTTLAAPSTTQSIAVPASNSTPVQEQPTAQSDTYGQA) is disordered. Residues 116–136 (ASNSTPVQEQPTAQSDTYGQA) show a composition bias toward polar residues. The UBA 1 domain maps to 142–185 (SGSSIEQMVQQIMEMGGGSWDKETVTRALRAAYNNPERAVDYLY). Residues 202–222 (VGSGRELTAPPPSGGPNSSPL) are disordered. Residues 239 to 282 (GTLEFLRGNDQFQQLRSMVNSNPQILQPMLQELGKQNPQLLRLI) enclose the STI1 domain. The UBA 2 domain maps to 320–360 (VTPEEQESIERLEAMGFDRAIVIEAFLSCDRNEELAANYLL).

Belongs to the RAD23 family. As to quaternary structure, interacts with 'Lys-48'-linked polyubiquitin chains. Interacts with RPN10. Widely expressed in the whole plant.

The protein localises to the nucleus. The protein resides in the cytoplasm. In terms of biological role, may be involved in nucleotide excision repair. Binds and presumably selects ubiquitin-conjugates for destruction. Prefers multiubiquitin chains rather than single ubiquitins, with a binding affinity for 'Lys-48'-linked ubiquitin chains. Acts as a ubiquitin receptor that associates with the 26S proteasomal docking subunit RPN10 for the indirect recognition of ubiquitinated substrates of ubiquitin/26S proteasome-mediated proteolysis (UPP). Involved in UV tolerance in roots, specifically in dark conditions. The sequence is that of Probable ubiquitin receptor RAD23a from Arabidopsis thaliana (Mouse-ear cress).